We begin with the raw amino-acid sequence, 95 residues long: Aspartyl/glutamyl-tRNA(Asn/Gln) amidotransferase subunit C (95 aa).

The protein belongs to the GatC family. In terms of assembly, heterotrimer of A, B and C subunits.

It carries out the reaction L-glutamyl-tRNA(Gln) + L-glutamine + ATP + H2O = L-glutaminyl-tRNA(Gln) + L-glutamate + ADP + phosphate + H(+). It catalyses the reaction L-aspartyl-tRNA(Asn) + L-glutamine + ATP + H2O = L-asparaginyl-tRNA(Asn) + L-glutamate + ADP + phosphate + 2 H(+). In terms of biological role, allows the formation of correctly charged Asn-tRNA(Asn) or Gln-tRNA(Gln) through the transamidation of misacylated Asp-tRNA(Asn) or Glu-tRNA(Gln) in organisms which lack either or both of asparaginyl-tRNA or glutaminyl-tRNA synthetases. The reaction takes place in the presence of glutamine and ATP through an activated phospho-Asp-tRNA(Asn) or phospho-Glu-tRNA(Gln). This is Aspartyl/glutamyl-tRNA(Asn/Gln) amidotransferase subunit C from Bradyrhizobium diazoefficiens (strain JCM 10833 / BCRC 13528 / IAM 13628 / NBRC 14792 / USDA 110).